The sequence spans 522 residues: Glutathione reductase, mitochondrial (522 aa).

A mitochondrion-targeting transit peptide spans 1 to 43; the sequence is MALLPRALSSGGRPSWRRAARASRGFPLPLPFPAAATHALSRA. Residues serine 74 and glycine 75 each coordinate FAD. Residue serine 74 coordinates glutathione. A glutathione-binding site is contributed by arginine 81. Glutamate 94 provides a ligand contact to FAD. At lysine 97 the chain carries N6-acetyllysine. FAD contacts are provided by threonine 101, cysteine 102, and lysine 110. Cysteines 102 and 107 form a disulfide. Tyrosine 158 serves as a coordination point for glutathione. Alanine 174 is a binding site for FAD. 6 residues coordinate NADP(+): alanine 239, isoleucine 242, glutamate 245, arginine 262, arginine 268, and glycine 334. Position 375 (aspartate 375) interacts with FAD. Leucine 381 is a binding site for NADP(+). Threonine 383 contacts FAD. Arginine 391 contacts glutathione. Valine 414 is a binding site for NADP(+). Histidine 511 contacts FAD. The active-site Proton acceptor is histidine 511.

Belongs to the class-I pyridine nucleotide-disulfide oxidoreductase family. Homodimer; disulfide-linked. FAD serves as cofactor.

The protein resides in the mitochondrion. Its subcellular location is the cytoplasm. It catalyses the reaction 2 glutathione + NADP(+) = glutathione disulfide + NADPH + H(+). Its function is as follows. Catalyzes the reduction of glutathione disulfide (GSSG) to reduced glutathione (GSH). Constitutes the major mechanism to maintain a high GSH:GSSG ratio in the cytosol. The polypeptide is Glutathione reductase, mitochondrial (GSR) (Callithrix jacchus (White-tufted-ear marmoset)).